Here is a 393-residue protein sequence, read N- to C-terminus: Bifunctional enzyme Fae/Hps (393 aa).

The segment at 1 to 161 (MYLIGEALVG…HEKDRAAHAV (161 aa)) is formaldehyde-activating enzyme. H17 serves as the catalytic Proton donor. Residues D19, L48, K66, T68, and Q83 each coordinate substrate. The interval 162–393 (MGFKVQRLWD…IDQFRIMTDF (232 aa)) is 3-hexulose-6-phosphate synthase.

It in the N-terminal section; belongs to the formaldehyde-activating enzyme family. The protein in the C-terminal section; belongs to the HPS/KGPDC family. HPS subfamily.

The catalysed reaction is 5,6,7,8-tetrahydromethanopterin + formaldehyde = 5,10-methylenetetrahydromethanopterin + H2O. It catalyses the reaction D-ribulose 5-phosphate + formaldehyde = D-arabino-hex-3-ulose 6-phosphate. Its pathway is carbohydrate biosynthesis; D-ribose 5-phosphate biosynthesis. Functionally, catalyzes the condensation of formaldehyde with tetrahydromethanopterin (H(4)MPT) to 5,10-methylenetetrahydromethanopterin. In terms of biological role, catalyzes the reversible formation of ribulose-5-phosphate and formaldehyde from 3-hexulose-6-phosphate. This is Bifunctional enzyme Fae/Hps from Methanoculleus marisnigri (strain ATCC 35101 / DSM 1498 / JR1).